Consider the following 241-residue polypeptide: 2,3-bisphosphoglycerate-dependent phosphoglycerate mutase (241 aa).

The active-site Tele-phosphohistidine intermediate is the H12. Residues 24 to 25, R61, 117 to 120, and K128 each bind substrate; these read SG and ERYY. The active-site Proton donor/acceptor is E117.

Belongs to the phosphoglycerate mutase family. BPG-dependent PGAM subfamily.

It catalyses the reaction (2R)-2-phosphoglycerate = (2R)-3-phosphoglycerate. It functions in the pathway carbohydrate degradation; glycolysis; pyruvate from D-glyceraldehyde 3-phosphate: step 3/5. In terms of biological role, catalyzes the interconversion of 2-phosphoglycerate and 3-phosphoglycerate. The protein is 2,3-bisphosphoglycerate-dependent phosphoglycerate mutase of Methanosarcina mazei (strain ATCC BAA-159 / DSM 3647 / Goe1 / Go1 / JCM 11833 / OCM 88) (Methanosarcina frisia).